The primary structure comprises 194 residues: Thymidine kinase (194 aa).

Residues 15–22 and 88–91 each bind ATP; these read GSMFSGKS and DEVQ. The Proton acceptor role is filled by Glu89. Residues Cys145, Cys148, Cys183, and His186 each contribute to the Zn(2+) site.

This sequence belongs to the thymidine kinase family. As to quaternary structure, homotetramer.

The protein localises to the cytoplasm. The enzyme catalyses thymidine + ATP = dTMP + ADP + H(+). The sequence is that of Thymidine kinase from Bacillus licheniformis (strain ATCC 14580 / DSM 13 / JCM 2505 / CCUG 7422 / NBRC 12200 / NCIMB 9375 / NCTC 10341 / NRRL NRS-1264 / Gibson 46).